A 271-amino-acid polypeptide reads, in one-letter code: PH domain-containing protein ECU06_0670 (271 aa).

The disordered stretch occupies residues 26–145; it reads AKKTLDSSES…EKKNDAFIPP (120 aa). Composition is skewed to basic and acidic residues over residues 42 to 64, 92 to 120, and 128 to 140; these read EVGE…EPAM, QPEK…LLDK, and EENA…KKND. One can recognise a PH domain in the interval 166 to 267; the sequence is NTVVEGWMWK…WVEKLNETIR (102 aa).

In Encephalitozoon cuniculi (strain GB-M1) (Microsporidian parasite), this protein is PH domain-containing protein ECU06_0670.